A 511-amino-acid chain; its full sequence is Cytochrome P450 monooxygenase PUL2 (511 aa).

Residues 14–34 (WMAFVYFTPVLFVVLYLLKEW) form a helical membrane-spanning segment. N-linked (GlcNAc...) asparagine glycans are attached at residues asparagine 116, asparagine 141, and asparagine 442. Position 462 (cysteine 462) interacts with heme.

This sequence belongs to the cytochrome P450 family. It depends on heme as a cofactor.

The protein localises to the membrane. Its pathway is siderophore biosynthesis. Functionally, cytochrome P450 monooxygenase; part of the PUL gene cluster that mediates the formation of pulcherrimin, a red iron-containing pigment composed of two cyclized and modified leucine molecules that acts as a siderophore, a chelator that binds iron outside the cell for subsequent uptake. Two leucine molecules are cyclized via a cyclodipeptide synthase, and the resulting diketopiperazine is oxidized by a cytochrome P450 monooxygenase to generate pulcherriminic acid (PA), which can then spontaneously bind iron to form pulcherrimin. The probable cyclodipeptide synthase PUL1 and the cytochrome P450 monooxygenase PUL2 encode the enzymes responsible for the two-step pulcherrimin biosynthesis pathway. The polypeptide is Cytochrome P450 monooxygenase PUL2 (Kluyveromyces lactis (strain ATCC 8585 / CBS 2359 / DSM 70799 / NBRC 1267 / NRRL Y-1140 / WM37) (Yeast)).